Reading from the N-terminus, the 606-residue chain is NADH-ubiquinone oxidoreductase chain 5 (606 aa).

16 consecutive transmembrane segments (helical) span residues 3–23, 35–55, 87–107, 117–137, 140–160, 171–191, 211–233, 241–261, 273–293, 301–320, 325–347, 366–386, 402–422, 457–477, 488–508, and 582–602; these read LFTSTLILSLSMLTIPVLMSL, YVKTIISYAFFTSLIPTLIFI, MIFTPVALFVTWSIMEFSMWY, FFKYLLMFLITMMILVTANNL, LFIGWEGVGIMSFLLIGWWYG, AILYNRIGDIGFILAMAWFLF, LPLLGLLLAATGKSAQFGLHPWL, TPVSALLHSSTMVVAGIFLLI, MQTLILCMGAITTLFTAICAL, IIAFSTSSQLGLMMVTIGIN, AFLHICTHAFFKAMLFMCSGSII, LPFTTTSLIVGSLALTGTPFL, SYTNAWALLMTLIATSLTAVY, LLIGSIFAGFIISLNITPMTI, LTALIITLTGFILALEISLMT, and GLIKLYFLSFLITLIITMLLF.

It belongs to the complex I subunit 5 family. As to quaternary structure, core subunit of respiratory chain NADH dehydrogenase (Complex I) which is composed of 45 different subunits.

It is found in the mitochondrion inner membrane. It catalyses the reaction a ubiquinone + NADH + 5 H(+)(in) = a ubiquinol + NAD(+) + 4 H(+)(out). In terms of biological role, core subunit of the mitochondrial membrane respiratory chain NADH dehydrogenase (Complex I) which catalyzes electron transfer from NADH through the respiratory chain, using ubiquinone as an electron acceptor. Essential for the catalytic activity and assembly of complex I. In Pseudosoriculus fumidus (Taiwanese brown-toothed shrew), this protein is NADH-ubiquinone oxidoreductase chain 5 (MT-ND5).